Reading from the N-terminus, the 476-residue chain is Aspartyl/glutamyl-tRNA(Asn/Gln) amidotransferase subunit B (476 aa).

Belongs to the GatB/GatE family. GatB subfamily. As to quaternary structure, heterotrimer of A, B and C subunits.

The enzyme catalyses L-glutamyl-tRNA(Gln) + L-glutamine + ATP + H2O = L-glutaminyl-tRNA(Gln) + L-glutamate + ADP + phosphate + H(+). It carries out the reaction L-aspartyl-tRNA(Asn) + L-glutamine + ATP + H2O = L-asparaginyl-tRNA(Asn) + L-glutamate + ADP + phosphate + 2 H(+). Allows the formation of correctly charged Asn-tRNA(Asn) or Gln-tRNA(Gln) through the transamidation of misacylated Asp-tRNA(Asn) or Glu-tRNA(Gln) in organisms which lack either or both of asparaginyl-tRNA or glutaminyl-tRNA synthetases. The reaction takes place in the presence of glutamine and ATP through an activated phospho-Asp-tRNA(Asn) or phospho-Glu-tRNA(Gln). This Listeria monocytogenes serovar 1/2a (strain ATCC BAA-679 / EGD-e) protein is Aspartyl/glutamyl-tRNA(Asn/Gln) amidotransferase subunit B.